The chain runs to 112 residues: Putative pterin-4-alpha-carbinolamine dehydratase (112 aa).

This sequence belongs to the pterin-4-alpha-carbinolamine dehydratase family.

It carries out the reaction (4aS,6R)-4a-hydroxy-L-erythro-5,6,7,8-tetrahydrobiopterin = (6R)-L-erythro-6,7-dihydrobiopterin + H2O. This is Putative pterin-4-alpha-carbinolamine dehydratase from Vibrio parahaemolyticus serotype O3:K6 (strain RIMD 2210633).